A 250-amino-acid polypeptide reads, in one-letter code: Sperm-egg fusion protein Juno (250 aa).

The N-terminal stretch at 1–19 (MACWWPLLLELWTVMPTWA) is a signal peptide. 8 cysteine pairs are disulfide-bonded: Cys27–Cys55, Cys47–Cys95, Cys56–Cys99, Cys79–Cys172, Cys86–Cys143, Cys132–Cys206, Cys136–Cys186, and Cys149–Cys166. An important for interaction with IZUMO1 region spans residues 62–81 (WEAHLDVSPLYNFSLFHCGL). The N-linked (GlcNAc...) asparagine glycan is linked to Asn73. The GPI-anchor amidated serine moiety is linked to residue Ser228. The propeptide occupies 229 to 250 (SAPSWELSYTIMVCSLFLPFLS).

The protein belongs to the folate receptor family. Monomer. Interacts with IZUMO1; the interaction is direct. IZUMO1 and IZUMO1R/JUNO form a complex with 1:1 stoichiometry. Interacts with FCRL3/MAIA; FCRL3/MAIA replaces IZUMO1R/JUNO as IZUMO1 receptor after sperm-egg adhesion, thereby permitting species-specific gamete fusion. Interacts with WDR54. In terms of processing, the protein is rapidly cleaved following fertilization, being only weakly detectable in zona-intact fertilized eggs at telophase II and undetectable at the pronuclear stage. Sheding is probably required to block to polyspermy and ensuring egg fusion with a single sperm. In terms of tissue distribution, expressed in unfertilized oocytes (at protein level).

It localises to the cell membrane. The protein localises to the cell projection. Its subcellular location is the microvillus membrane. Receptor for IZUMO1 present at the cell surface of oocytes (oolemma), which is essential for species-specific gamete recognition and fertilization. The IZUMO1:IZUMO1R/JUNO interaction is a necessary adhesion event between sperm and egg that is required for fertilization but is not sufficient for cell fusion. The ligand-receptor interaction probably does not act as a membrane 'fusogen'. Does not bind folate. This is Sperm-egg fusion protein Juno from Homo sapiens (Human).